The sequence spans 902 residues: U3 small nucleolar RNA-associated protein 21 homolog (902 aa).

WD repeat units lie at residues 40–71 (DIEA…LLFV), 80–110 (TCLK…WDID), 119–154 (THLD…LHTT), 164–198 (TSLL…RVHE), 206–243 (GITS…MEFK), 249–284 (LSCS…QNVT), 289–332 (FGSL…RSRN), 339–373 (SFVK…QSTE), 399–438 (TALS…GQHV), 447–481 (VRSV…KRKS), 492–528 (VTAV…DSLD), 533–568 (ITHA…VREL), 570–611 (GHSN…DSIS), and 613–651 (PSVC…KHVS).

As to quaternary structure, interacts with snoRNA U3. Interacts with MPP10. Component of the ribosomal small subunit (SSU) processome composed of at least 40 protein subunits and snoRNA U3.

The protein resides in the nucleus. It localises to the nucleolus. Functionally, involved in nucleolar processing of pre-18S ribosomal RNA and ribosome assembly. This is U3 small nucleolar RNA-associated protein 21 homolog from Schizosaccharomyces pombe (strain 972 / ATCC 24843) (Fission yeast).